Here is a 589-residue protein sequence, read N- to C-terminus: ATP-dependent lipid A-core flippase (589 aa).

Transmembrane regions (helical) follow at residues 29 to 49, 70 to 90, 157 to 177, 261 to 281, and 283 to 303; these read LLLV…TGFL, WLPV…YITD, VIGA…TILV, MIGA…ALAG, and LTAG…PGLK. The ABC transmembrane type-1 domain maps to 32–314; that stretch reads VAALIAALIE…LTNVQNMVQR (283 aa). The 237-residue stretch at 346 to 582 folds into the ABC transporter domain; that stretch reads IEFRDVTARY…GGLYSHLHGM (237 aa). 380–387 is an ATP binding site; that stretch reads GRSGSGKS.

The protein belongs to the ABC transporter superfamily. Lipid exporter (TC 3.A.1.106) family. Homodimer.

The protein resides in the cell inner membrane. It catalyses the reaction ATP + H2O + lipid A-core oligosaccharideSide 1 = ADP + phosphate + lipid A-core oligosaccharideSide 2.. In terms of biological role, involved in lipopolysaccharide (LPS) biosynthesis. Translocates lipid A-core from the inner to the outer leaflet of the inner membrane. Transmembrane domains (TMD) form a pore in the inner membrane and the ATP-binding domain (NBD) is responsible for energy generation. This chain is ATP-dependent lipid A-core flippase, found in Xanthomonas campestris pv. campestris (strain 8004).